The following is a 166-amino-acid chain: V-type proton ATPase subunit c4 (166 aa).

Topologically, residues 1-13 (MASSGFSGDETAP) are lumenal. A helical transmembrane segment spans residues 14 to 34 (FFGFLGAAAALVFSCMGAAYG). Residues 35–56 (TAKSGVGVASMGVMRPELVMKS) are Cytoplasmic-facing. Residues 57–77 (IVPVVMAGVLGIYGLIIAVII) form a helical membrane-spanning segment. Topologically, residues 78-96 (STGINPKAKSYYLFDGYAH) are lumenal. A helical membrane pass occupies residues 97–118 (LSSGLACGLAGLSAGMAIGIVG). Topologically, residues 119–130 (DAGVRANAQQPK) are cytoplasmic. Residues 131-156 (LFVGMILILIFAEALALYGLIVGIIL) traverse the membrane as a helical segment. Topologically, residues 157 to 166 (SSRAGQSRAE) are lumenal.

Belongs to the V-ATPase proteolipid subunit family. V-ATPase is a heteromultimeric enzyme composed of a peripheral catalytic V1 complex (components A to H) attached to an integral membrane V0 proton pore complex (components: a, c, c'', d and e). The proteolipid components c and c'' are present as a hexameric ring that forms the proton-conducting pore. Interacts with APD2.

The protein localises to the vacuole membrane. Its function is as follows. Proton-conducting pore forming subunit of the membrane integral V0 complex of vacuolar ATPase. V-ATPase is responsible for acidifying a variety of intracellular compartments in eukaryotic cells. This Arabidopsis thaliana (Mouse-ear cress) protein is V-type proton ATPase subunit c4 (VHA-c4).